The primary structure comprises 346 residues: Heat-inducible transcription repressor HrcA (346 aa).

The protein belongs to the HrcA family.

Functionally, negative regulator of class I heat shock genes (grpE-dnaK-dnaJ and groELS operons). Prevents heat-shock induction of these operons. This chain is Heat-inducible transcription repressor HrcA, found in Fructilactobacillus sanfranciscensis (Lactobacillus sanfranciscensis).